The primary structure comprises 389 residues: Na(+)/H(+) antiporter NhaA (389 aa).

The next 11 membrane-spanning stretches (helical) occupy residues 14 to 34 (AGGI…NSPL), 59 to 79 (LLLW…GLEV), 95 to 115 (SLPS…YLLF), 124 to 144 (AGWA…MALL), 154 to 174 (VFLL…IALF), 177 to 197 (SDLS…LVGL), 213 to 233 (LILW…GVII), 261 to 281 (FLIL…NMSL), 290 to 310 (IGIA…FSFI), 328 to 348 (IAPV…IASL), and 363 to 383 (LGTL…LSKV).

The protein belongs to the NhaA Na(+)/H(+) (TC 2.A.33) antiporter family.

The protein localises to the cell inner membrane. It catalyses the reaction Na(+)(in) + 2 H(+)(out) = Na(+)(out) + 2 H(+)(in). In terms of biological role, na(+)/H(+) antiporter that extrudes sodium in exchange for external protons. This chain is Na(+)/H(+) antiporter NhaA, found in Shewanella sp. (strain W3-18-1).